We begin with the raw amino-acid sequence, 798 residues long: Sodium/hydrogen exchanger 4 (798 aa).

The Cytoplasmic segment spans residues 1-13 (MALQMFVTYSPWN). An intramembrane region (name=A/M1) is located at residues 14–28 (CLLLLVALECSEASS). Over 29–69 (DLNESANSTAQYASNAWFAAASSEPEEGISVFELDYDYVQI) the chain is Cytoplasmic. An intramembrane region (name=B/M2) is located at residues 70 to 90 (PYEVTLWILLASLAKIGFHLY). Residues 91–94 (HRLP) are Cytoplasmic-facing. The chain crosses the membrane as a helical span at residues 95-115 (GLMPESCLLILVGALVGGIIF). Topologically, residues 116 to 127 (GTDHKSPPVMDS) are extracellular. A helical transmembrane segment spans residues 128–148 (SIYFLYLLPPIVLEGGYFMPT). The Cytoplasmic portion of the chain corresponds to 149–154 (RPFFEN). A helical transmembrane segment spans residues 155–175 (IGSILWWAVLGALINALGIGL). Topologically, residues 176 to 196 (SLYLICQVKAFGLGDVNLLQN) are extracellular. A helical transmembrane segment spans residues 197–217 (LLFGSLISAVDPVAVLAVFEE). Residues 218 to 226 (ARVNEQLYM) are Cytoplasmic-facing. The helical transmembrane segment at 227–247 (MIFGEALLNDGITVVLYNMLI) threads the bilayer. Residues 248-270 (AFTKMHKFEDIETVDILAGCARF) lie on the Extracellular side of the membrane. Residues 271–291 (IVVGLGGVLFGIVFGFISAFI) form a helical membrane-spanning segment. The Cytoplasmic portion of the chain corresponds to 292–304 (TRFTQNISAIEPL). A helical membrane pass occupies residues 305–325 (IVFMFSYLSYLAAETLYLSGI). Over 326–356 (LAITACAVTMKKYVEENVSQTSYTTIKYFMK) the chain is Extracellular. Residue Asn342 is glycosylated (N-linked (GlcNAc...) asparagine). A helical membrane pass occupies residues 357–373 (MLSSVSETLIFIFMGVS). Residues 374–384 (TVGKNHEWNWA) lie on the Cytoplasmic side of the membrane. Residues 385–405 (FICFTLAFCQIWRAISVFALF) form a helical membrane-spanning segment. Residues 406–420 (YISNQFRTFPFSIKD) are Extracellular-facing. The segment at residues 421–441 (QCIIFYSGVRGAGSFSLAFLL) is an intramembrane region (name=L). The Extracellular segment spans residues 442 to 450 (PLSLFPRKK). Residues 451 to 471 (MFVTATLVVIYFTVFIQGITV) form a helical membrane-spanning segment. At 472 to 798 (GPLVRYLDVK…RSHSPLLQKK (327 aa)) the chain is on the cytoplasmic side. Disordered regions lie at residues 662-690 (PYGN…GSPS) and 776-798 (RWTA…LQKK). Residues 784 to 798 (GRDHHRSHSPLLQKK) are compositionally biased toward basic residues.

The protein belongs to the monovalent cation:proton antiporter 1 (CPA1) transporter (TC 2.A.36) family. As to quaternary structure, homodimer; each protomer has one site for sodium and one site for proton binding. Interacts with CHP1 and CHP2. Post-translationally, may be phosphorylated.

It is found in the basolateral cell membrane. Its subcellular location is the apical cell membrane. The protein resides in the zymogen granule membrane. It catalyses the reaction Na(+)(in) + H(+)(out) = Na(+)(out) + H(+)(in). It carries out the reaction Na(+)(out) + NH4(+)(in) = Na(+)(in) + NH4(+)(out). Functionally, electroneutral antiporter that exchanges sodium for protons or ammonium ions at the basolateral membrane of epithelia to regulate cell volume and intracellular pH upon hypertonic conditions. As part of transcellular ammonia transport in renal tubules, mediates basolateral ammonium extrusion in the medullary thick ascending limb, regulating the corticopapillary ammonium gradient and overall renal acid excretion. Mediates sodium:proton exchange in gastric parietal cells secondary to cAMP-dependent acid secretion and hyperosmolarity. Possibly coupled to chloride:bicarbonate antiporter, enables loading of parietal cells with sodium and chloride ions to maintain cell volume and normal gastric acid secretion. Functions as a sodium sensor in neurons of organum vasculosum of the lamina terminalis where it regulates water intake in response to increased sodium concentration in body fluids. This chain is Sodium/hydrogen exchanger 4 (SLC9A4), found in Homo sapiens (Human).